The following is a 143-amino-acid chain: Mediator of RNA polymerase II transcription subunit 9 (143 aa).

The stretch at 84–141 forms a coiled coil; that stretch reads QDCNHKIFELQKRFESAREQIRQLPGIDYNKDEQLQRLELLRNQFKLKQQLIRKYKDT.

It belongs to the Mediator complex subunit 9 family. In terms of assembly, component of the Mediator complex.

It is found in the nucleus. In terms of biological role, component of the Mediator complex, a coactivator involved in the regulated transcription of nearly all RNA polymerase II-dependent genes. Mediator functions as a bridge to convey information from gene-specific regulatory proteins to the basal RNA polymerase II transcription machinery. Mediator is recruited to promoters by direct interactions with regulatory proteins and serves as a scaffold for the assembly of a functional preinitiation complex with RNA polymerase II and the general transcription factors. The protein is Mediator of RNA polymerase II transcription subunit 9 (MED9) of Drosophila pseudoobscura pseudoobscura (Fruit fly).